Reading from the N-terminus, the 152-residue chain is Complexin (152 aa).

The tract at residues 1 to 119 (MAAFIAKQMV…EEEDDDEFAK (119 aa)) is disordered. A compositionally biased stretch (acidic residues) spans 23-39 (DEGEKEGNENAEEEAAA). Composition is skewed to basic and acidic residues over residues 41-82 (EEAR…VKEE) and 90-104 (DEGR…KEEL). The interval 59–75 (EEEREEMRQTIRDKYGL) is interaction with the SNARE complex. The residue at position 149 (Cys149) is a Cysteine methyl ester. Cys149 is lipidated: S-farnesyl cysteine. The propeptide at 150–152 (SLQ) is removed in mature form.

It belongs to the complexin/synaphin family. In terms of assembly, binds to the SNARE core complex containing SNAP25, synaptobrevin and syntaxin-1.

The protein localises to the membrane. It is found in the cytoplasm. Its subcellular location is the cytosol. Its function is as follows. Positively regulates a late step in synaptic vesicle exocytosis. The polypeptide is Complexin (cpx) (Doryteuthis pealeii (Longfin inshore squid)).